Here is a 283-residue protein sequence, read N- to C-terminus: Bis(5'-nucleosyl)-tetraphosphatase, symmetrical (283 aa).

The protein belongs to the Ap4A hydrolase family.

It catalyses the reaction P(1),P(4)-bis(5'-adenosyl) tetraphosphate + H2O = 2 ADP + 2 H(+). Its function is as follows. Hydrolyzes diadenosine 5',5'''-P1,P4-tetraphosphate to yield ADP. In Pseudomonas fluorescens (strain SBW25), this protein is Bis(5'-nucleosyl)-tetraphosphatase, symmetrical.